The following is a 258-amino-acid chain: Ribosomal RNA small subunit methyltransferase J (258 aa).

S-adenosyl-L-methionine-binding positions include 111-112 (RD), 127-128 (ER), and D179.

It belongs to the methyltransferase superfamily. RsmJ family.

The protein localises to the cytoplasm. The catalysed reaction is guanosine(1516) in 16S rRNA + S-adenosyl-L-methionine = N(2)-methylguanosine(1516) in 16S rRNA + S-adenosyl-L-homocysteine + H(+). Specifically methylates the guanosine in position 1516 of 16S rRNA. This chain is Ribosomal RNA small subunit methyltransferase J, found in Alteromonas mediterranea (strain DSM 17117 / CIP 110805 / LMG 28347 / Deep ecotype).